A 226-amino-acid chain; its full sequence is DNA mismatch repair protein MutH (226 aa).

Belongs to the MutH family.

It localises to the cytoplasm. Sequence-specific endonuclease that cleaves unmethylated GATC sequences. It is involved in DNA mismatch repair. This is DNA mismatch repair protein MutH from Vibrio parahaemolyticus serotype O3:K6 (strain RIMD 2210633).